Reading from the N-terminus, the 255-residue chain is Sulfate transporter CysZ (255 aa).

Transmembrane regions (helical) follow at residues Leu-26–Ala-46, Leu-71–Leu-91, Leu-150–Phe-170, and Ile-211–Ala-231.

It belongs to the CysZ family.

It localises to the cell inner membrane. High affinity, high specificity proton-dependent sulfate transporter, which mediates sulfate uptake. Provides the sulfur source for the cysteine synthesis pathway. This Pseudomonas fluorescens (strain SBW25) protein is Sulfate transporter CysZ.